Reading from the N-terminus, the 343-residue chain is Protein RecA (343 aa).

66 to 73 contacts ATP; it reads GPESSGKT.

It belongs to the RecA family.

It is found in the cytoplasm. Functionally, can catalyze the hydrolysis of ATP in the presence of single-stranded DNA, the ATP-dependent uptake of single-stranded DNA by duplex DNA, and the ATP-dependent hybridization of homologous single-stranded DNAs. It interacts with LexA causing its activation and leading to its autocatalytic cleavage. This Rickettsia africae (strain ESF-5) protein is Protein RecA.